The primary structure comprises 257 residues: NAD-capped RNA hydrolase NudC (257 aa).

Arginine 69 provides a ligand contact to substrate. Zn(2+) is bound by residues cysteine 98 and cysteine 101. Glutamate 111 serves as a coordination point for substrate. Zn(2+) is bound by residues cysteine 116 and cysteine 119. Tyrosine 124 serves as a coordination point for substrate. The 124-residue stretch at 125–248 (PQIAPCIIVA…TVARRLIEDT (124 aa)) folds into the Nudix hydrolase domain. Alanine 158, glutamate 174, and glutamate 178 together coordinate a divalent metal cation. The Nudix box motif lies at 159 to 180 (GFVEVGETLEQAVAREVMEESG). 192 to 199 (QPWPFPQS) lines the substrate pocket. An a divalent metal cation-binding site is contributed by glutamate 219. Residue alanine 241 participates in substrate binding.

The protein belongs to the Nudix hydrolase family. NudC subfamily. As to quaternary structure, homodimer. Requires Mg(2+) as cofactor. Mn(2+) is required as a cofactor. Zn(2+) serves as cofactor.

It carries out the reaction a 5'-end NAD(+)-phospho-ribonucleoside in mRNA + H2O = a 5'-end phospho-adenosine-phospho-ribonucleoside in mRNA + beta-nicotinamide D-ribonucleotide + 2 H(+). The enzyme catalyses NAD(+) + H2O = beta-nicotinamide D-ribonucleotide + AMP + 2 H(+). It catalyses the reaction NADH + H2O = reduced beta-nicotinamide D-ribonucleotide + AMP + 2 H(+). Functionally, mRNA decapping enzyme that specifically removes the nicotinamide adenine dinucleotide (NAD) cap from a subset of mRNAs by hydrolyzing the diphosphate linkage to produce nicotinamide mononucleotide (NMN) and 5' monophosphate mRNA. The NAD-cap is present at the 5'-end of some mRNAs and stabilizes RNA against 5'-processing. Has preference for mRNAs with a 5'-end purine. Catalyzes the hydrolysis of a broad range of dinucleotide pyrophosphates. In Salmonella agona (strain SL483), this protein is NAD-capped RNA hydrolase NudC.